The following is a 282-amino-acid chain: Release factor glutamine methyltransferase (282 aa).

The S-adenosyl-L-methionine site is built by aspartate 141, phenylalanine 169, and asparagine 186. 186 to 189 (NPPY) is a substrate binding site.

It belongs to the protein N5-glutamine methyltransferase family. PrmC subfamily.

It catalyses the reaction L-glutaminyl-[peptide chain release factor] + S-adenosyl-L-methionine = N(5)-methyl-L-glutaminyl-[peptide chain release factor] + S-adenosyl-L-homocysteine + H(+). In terms of biological role, methylates the class 1 translation termination release factors RF1/PrfA and RF2/PrfB on the glutamine residue of the universally conserved GGQ motif. The sequence is that of Release factor glutamine methyltransferase from Mycoplasma mycoides subsp. mycoides SC (strain CCUG 32753 / NCTC 10114 / PG1).